A 549-amino-acid chain; its full sequence is MKLALALSLIASVAAAPTAKLANGDTITGLNAIINEAFLGIPFAEPPVGNLRFKDPVPYSGSLNGQKFTSYGPSCMQQNPEGTFEENLGKTALDLVMQSKVFQAVLPQSEDCLTINVVRPPGTKAGANLPVMLWIFGGGFEIGSPTIFPPAQMVTKSVLMGKPIIHVAVNYRVASWGFLAGDDIKAEGSGNAGLKDQRLGMQWVADNIAGFGGDPSKVTIFGESAGSMSVLCHLIWNDGDNTYKGKPLFRAGIMQSGAMVPSDPVDGTYGNEIYDLFVSSAGCGSASDKLACLRSASSDTLLDATNNTPGFLAYSSLRLSYLPRPDGKNITDDMYKLVRDGKYASVPVIIGDQNDEGTIFGLSSLNVTTNAQARAYFKQSFIHASDAEIDTLMAAYPQDITQGSPFDTGIFNAITPQFKRISAVLGDLAFIHARRYFLNHFQGGTKYSFLSKQLSGLPIMGTFHANDIVWQDYLLGSGSVIYNNAFIAFATDLDPNTAGLLVNWPKYTSSSQSGNNLMMINALGLYTGKDNFRTAGYDALMTNPSSFFV.

A signal peptide spans 1–15 (MKLALALSLIASVAA). A disulfide bridge connects residues C75 and C112. The Acyl-ester intermediate role is filled by S224. C283 and C292 are joined by a disulfide. N329 carries N-linked (GlcNAc...) asparagine glycosylation. Residue E356 is the Charge relay system of the active site. N-linked (GlcNAc...) asparagine glycosylation occurs at N366. H464 serves as the catalytic Charge relay system.

It belongs to the type-B carboxylesterase/lipase family. As to quaternary structure, monomer and homodimer.

The enzyme catalyses a triacylglycerol + H2O = a diacylglycerol + a fatty acid + H(+). The polypeptide is Lipase 3 (LIP3) (Diutina rugosa (Yeast)).